The primary structure comprises 341 residues: L-threonine 3-dehydrogenase (341 aa).

Cys-38 serves as a coordination point for Zn(2+). Active-site charge relay system residues include Thr-40 and His-43. Residues His-63, Glu-64, Cys-93, Cys-96, Cys-99, and Cys-107 each contribute to the Zn(2+) site. Residues Ile-175, Asp-195, Arg-200, 262–264 (LGI), and 286–287 (IY) contribute to the NAD(+) site.

The protein belongs to the zinc-containing alcohol dehydrogenase family. In terms of assembly, homotetramer. Zn(2+) is required as a cofactor.

It is found in the cytoplasm. The catalysed reaction is L-threonine + NAD(+) = (2S)-2-amino-3-oxobutanoate + NADH + H(+). It functions in the pathway amino-acid degradation; L-threonine degradation via oxydo-reductase pathway; glycine from L-threonine: step 1/2. Catalyzes the NAD(+)-dependent oxidation of L-threonine to 2-amino-3-ketobutyrate. The sequence is that of L-threonine 3-dehydrogenase from Escherichia fergusonii (strain ATCC 35469 / DSM 13698 / CCUG 18766 / IAM 14443 / JCM 21226 / LMG 7866 / NBRC 102419 / NCTC 12128 / CDC 0568-73).